Reading from the N-terminus, the 194-residue chain is CASP-like protein 4C1 (194 aa).

At 1–35 (MRSPHAFRNGESPTLRDHTHFHSTVTAQKLRRFNS) the chain is on the cytoplasmic side. The chain crosses the membrane as a helical span at residues 36 to 56 (LILLLRLASFSFSLASAVFML). Topologically, residues 57-74 (TNSRGSASPHWYDFDAFR) are extracellular. The chain crosses the membrane as a helical span at residues 75–95 (FVFVANAIVALYSVFEMGTCV). Residues 96–114 (WEFSRETTLWPEAFQVWFD) lie on the Cytoplasmic side of the membrane. The chain crosses the membrane as a helical span at residues 115-135 (FGHDQVFSYLLLSAGSAAAAL). The Extracellular segment spans residues 136–157 (ARTMRGGDTCTANKAFCLQSDV). A helical membrane pass occupies residues 158 to 178 (AIGLGFAAFLFLAFSSCFSGF). Over 179 to 194 (RVACFLITGSRFHLYS) the chain is Cytoplasmic.

This sequence belongs to the Casparian strip membrane proteins (CASP) family. Homodimer and heterodimers.

The protein resides in the cell membrane. The protein is CASP-like protein 4C1 of Arabidopsis thaliana (Mouse-ear cress).